The sequence spans 795 residues: Phenylalanine--tRNA ligase beta subunit (795 aa).

Positions 39–148 (AGSFNGVVVG…ADAPLGTDIR (110 aa)) constitute a tRNA-binding domain. One can recognise a B5 domain in the interval 401–476 (PKRATITLRR…RVYGYNNIPD (76 aa)). Residues Asp-454, Asp-460, Glu-463, and Glu-464 each contribute to the Mg(2+) site. One can recognise an FDX-ACB domain in the interval 701 to 794 (SRFPANRRDI…LKERFQASLR (94 aa)).

This sequence belongs to the phenylalanyl-tRNA synthetase beta subunit family. Type 1 subfamily. In terms of assembly, tetramer of two alpha and two beta subunits. Mg(2+) serves as cofactor.

It localises to the cytoplasm. It carries out the reaction tRNA(Phe) + L-phenylalanine + ATP = L-phenylalanyl-tRNA(Phe) + AMP + diphosphate + H(+). The chain is Phenylalanine--tRNA ligase beta subunit from Salmonella choleraesuis (strain SC-B67).